The primary structure comprises 437 residues: Homogentisate 1,2-dioxygenase (437 aa).

His295 serves as the catalytic Proton acceptor. His338 and Glu344 together coordinate Fe cation. Homogentisate-binding residues include Tyr353 and His374. His374 serves as a coordination point for Fe cation.

This sequence belongs to the homogentisate dioxygenase family. In terms of assembly, hexamer; dimer of trimers. Fe cation serves as cofactor.

The enzyme catalyses homogentisate + O2 = 4-maleylacetoacetate + H(+). Its pathway is amino-acid degradation; L-phenylalanine degradation; acetoacetate and fumarate from L-phenylalanine: step 4/6. Functionally, involved in the catabolism of homogentisate (2,5-dihydroxyphenylacetate or 2,5-OH-PhAc), a central intermediate in the degradation of phenylalanine and tyrosine. Catalyzes the oxidative ring cleavage of the aromatic ring of homogentisate to yield maleylacetoacetate. The protein is Homogentisate 1,2-dioxygenase of Myxococcus xanthus (strain DK1622).